A 225-amino-acid chain; its full sequence is DnaA regulatory inactivator Hda (225 aa).

Belongs to the DnaA family. HdA subfamily. In terms of assembly, the active form seems to be an ADP-bound monomer. Forms the RIDA complex (regulatory inactivation of DnaA) of ATP-DnaA, ADP-Hda and the DNA-loaded beta sliding clamp (dnaN).

Mediates the interaction of DNA replication initiator protein DnaA with DNA polymerase subunit beta sliding clamp (dnaN). Stimulates hydrolysis of ATP-DnaA to ADP-DnaA, rendering DnaA inactive for reinitiation, a process called regulatory inhibition of DnaA or RIDA. This chain is DnaA regulatory inactivator Hda, found in Klebsiella pneumoniae (strain 342).